Consider the following 401-residue polypeptide: ATP phosphoribosyltransferase regulatory subunit (401 aa).

This sequence belongs to the class-II aminoacyl-tRNA synthetase family. HisZ subfamily. In terms of assembly, heteromultimer composed of HisG and HisZ subunits.

The protein localises to the cytoplasm. The protein operates within amino-acid biosynthesis; L-histidine biosynthesis; L-histidine from 5-phospho-alpha-D-ribose 1-diphosphate: step 1/9. Functionally, required for the first step of histidine biosynthesis. May allow the feedback regulation of ATP phosphoribosyltransferase activity by histidine. The protein is ATP phosphoribosyltransferase regulatory subunit of Cyanothece sp. (strain PCC 7425 / ATCC 29141).